We begin with the raw amino-acid sequence, 267 residues long: 3-methyl-2-oxobutanoate hydroxymethyltransferase (267 aa).

Residues Asp45 and Asp84 each contribute to the Mg(2+) site. 3-methyl-2-oxobutanoate is bound by residues 45-46 (DS), Asp84, and Lys113. Residue Glu115 coordinates Mg(2+). The Proton acceptor role is filled by Glu182.

The protein belongs to the PanB family. As to quaternary structure, homodecamer; pentamer of dimers. Requires Mg(2+) as cofactor.

It is found in the cytoplasm. The catalysed reaction is 3-methyl-2-oxobutanoate + (6R)-5,10-methylene-5,6,7,8-tetrahydrofolate + H2O = 2-dehydropantoate + (6S)-5,6,7,8-tetrahydrofolate. It participates in cofactor biosynthesis; coenzyme A biosynthesis. In terms of biological role, catalyzes the reversible reaction in which hydroxymethyl group from 5,10-methylenetetrahydrofolate is transferred onto alpha-ketoisovalerate to form ketopantoate. In Saccharolobus islandicus (strain Y.N.15.51 / Yellowstone #2) (Sulfolobus islandicus), this protein is 3-methyl-2-oxobutanoate hydroxymethyltransferase.